The following is a 165-amino-acid chain: Basic leucine zipper 43 (165 aa).

The bZIP domain maps to 70–133 (NERKQKRKIS…EKVIEENVQL (64 aa)). Residues 72-93 (RKQKRKISNRESARRSRMRKQR) are basic motif. Residues 98–112 (LWSQVMWLRDENHQL) are leucine-zipper.

In terms of assembly, forms heterodimers with BZIP34 and BZIP61.

Its subcellular location is the nucleus. Functionally, probable transcription factor involved in somatic embryogenesis. Acts as a positive regulator of BHLH109. The protein is Basic leucine zipper 43 of Arabidopsis thaliana (Mouse-ear cress).